Reading from the N-terminus, the 79-residue chain is Putative Fis-like DNA-binding protein (79 aa).

The segment at residues 55 to 74 (QSKASVMLGLNRNTLRKKLI) is a DNA-binding region (H-T-H motif).

The protein belongs to the transcriptional regulatory Fis family.

In Neisseria meningitidis serogroup A / serotype 4A (strain DSM 15465 / Z2491), this protein is Putative Fis-like DNA-binding protein.